A 264-amino-acid chain; its full sequence is MLLLSLTLSLVLLGSSWGCGIPAIKPALSFSQRIVNGENAVLGSWPWQVSLQDSSGFHFCGGSLISQSWVVTAAHCNVSPGRHFVVLGEYDRSSNAEPLQVLSVSRAITHPSWNSTTMNNDVTLLKLASPAQYTTRISPVCLASSNEALTEGLTCVTTGWGRLSGVGNVTPAHLQQVALPLVTVNQCRQYWGSSITDSMICAGGAGASSCQGDSGGPLVCQKGNTWVLIGIVSWGTKNCNVRAPAVYTRVSKFSTWINQVIAYN.

An N-terminal signal peptide occupies residues 1–18 (MLLLSLTLSLVLLGSSWG). Residues 19-33 (CGIPAIKPALSFSQR) constitute a propeptide, activation peptide. Disulfide bonds link Cys-19–Cys-141, Cys-60–Cys-76, Cys-155–Cys-220, Cys-187–Cys-201, and Cys-210–Cys-239. A Peptidase S1 domain is found at 34–262 (IVNGENAVLG…FSTWINQVIA (229 aa)). The Charge relay system role is filled by His-75. A glycan (N-linked (GlcNAc...) asparagine) is linked at Asn-114. The active-site Charge relay system is the Asp-121. The Charge relay system role is filled by Ser-214.

Belongs to the peptidase S1 family.

This chain is Chymotrypsin-like protease CTRL-1 (CTRL), found in Homo sapiens (Human).